A 63-amino-acid polypeptide reads, in one-letter code: AQIDCDKECNRRCSKASAHDRCLKYCGICCKKCHCVPPGTAGNEDVCPCYANLKNSKGGHKCP.

This sequence belongs to the GASA family. Expressed in pollen (at protein level).

The protein is Cypmaclein of Juniperus ashei (Ozark white cedar).